The primary structure comprises 87 residues: U3-theraphotoxin-Cg1c (87 aa).

Positions methionine 1–alanine 23 are cleaved as a signal peptide. Residues glutamate 24–glutamate 51 constitute a propeptide that is removed on maturation. 3 disulfides stabilise this stretch: cysteine 52–cysteine 65, cysteine 56–cysteine 79, and cysteine 73–cysteine 84.

This sequence belongs to the neurotoxin 12 (Hwtx-2) family. 03 (juruin) subfamily. As to expression, expressed by the venom gland.

It is found in the secreted. Probable ion channel inhibitor. The sequence is that of U3-theraphotoxin-Cg1c from Chilobrachys guangxiensis (Chinese earth tiger tarantula).